We begin with the raw amino-acid sequence, 119 residues long: V-type proton ATPase subunit F (119 aa).

It belongs to the V-ATPase F subunit family. In terms of assembly, V-ATPase is a heteromultimeric enzyme made up of two complexes: the ATP-hydrolytic V1 complex and the proton translocation V0 complex. The V1 complex consists of three catalytic AB heterodimers that form a heterohexamer, three peripheral stalks each consisting of EG heterodimers, one central rotor including subunits D and F, and the regulatory subunits C and H. The proton translocation complex V0 consists of the proton transport subunit a, a ring of proteolipid subunits c9c'', rotary subunit d, subunits e and f, and the accessory subunits ATP6AP1/Ac45 and ATP6AP2/PRR.

The protein localises to the cytoplasmic vesicle. The protein resides in the secretory vesicle. Its subcellular location is the synaptic vesicle membrane. It is found in the clathrin-coated vesicle membrane. Subunit of the V1 complex of vacuolar(H+)-ATPase (V-ATPase), a multisubunit enzyme composed of a peripheral complex (V1) that hydrolyzes ATP and a membrane integral complex (V0) that translocates protons. V-ATPase is responsible for acidifying and maintaining the pH of intracellular compartments and in some cell types, is targeted to the plasma membrane, where it is responsible for acidifying the extracellular environment. The chain is V-type proton ATPase subunit F (Atp6v1f) from Mus musculus (Mouse).